We begin with the raw amino-acid sequence, 509 residues long: ATP synthase subunit beta (509 aa).

Position 167 to 174 (167 to 174) interacts with ATP; that stretch reads GGAGVGKT. The segment at 476 to 509 is disordered; sequence ESLGAKMEDTSGDGAPAQSDSKSDSKGDDADKDA. Basic and acidic residues predominate over residues 496 to 509; it reads SKSDSKGDDADKDA.

The protein belongs to the ATPase alpha/beta chains family. As to quaternary structure, F-type ATPases have 2 components, CF(1) - the catalytic core - and CF(0) - the membrane proton channel. CF(1) has five subunits: alpha(3), beta(3), gamma(1), delta(1), epsilon(1). CF(0) has three main subunits: a(1), b(2) and c(9-12). The alpha and beta chains form an alternating ring which encloses part of the gamma chain. CF(1) is attached to CF(0) by a central stalk formed by the gamma and epsilon chains, while a peripheral stalk is formed by the delta and b chains.

The protein resides in the cell membrane. It carries out the reaction ATP + H2O + 4 H(+)(in) = ADP + phosphate + 5 H(+)(out). Produces ATP from ADP in the presence of a proton gradient across the membrane. The catalytic sites are hosted primarily by the beta subunits. This Mycobacterium sp. (strain KMS) protein is ATP synthase subunit beta.